A 507-amino-acid polypeptide reads, in one-letter code: Probable allantoinase (507 aa).

Residues histidine 105, histidine 107, lysine 195, histidine 231, histidine 294, and aspartate 368 each coordinate Zn(2+). An N6-carboxylysine modification is found at lysine 195.

Belongs to the metallo-dependent hydrolases superfamily. Allantoinase family. As to quaternary structure, homotetramer. The cofactor is Zn(2+). Carboxylation allows a single lysine to coordinate two zinc ions.

It catalyses the reaction (S)-allantoin + H2O = allantoate + H(+). The protein operates within nitrogen metabolism; (S)-allantoin degradation; allantoate from (S)-allantoin: step 1/1. Catalyzes the conversion of allantoin (5-ureidohydantoin) to allantoate by hydrolytic cleavage of the five-member hydantoin ring. Catalyzes the first step of the ureide allantoin degradation followed by the sequential activity of AAH, UGLYAH and UAH which allows a complete purine breakdown without the intermediate generation of urea. The protein is Probable allantoinase (ALN) of Oryza sativa subsp. japonica (Rice).